The following is a 688-amino-acid chain: Glycine--tRNA ligase beta subunit (688 aa).

Belongs to the class-II aminoacyl-tRNA synthetase family. In terms of assembly, tetramer of two alpha and two beta subunits.

The protein resides in the cytoplasm. The enzyme catalyses tRNA(Gly) + glycine + ATP = glycyl-tRNA(Gly) + AMP + diphosphate. The protein is Glycine--tRNA ligase beta subunit of Shewanella sp. (strain ANA-3).